Here is a 361-residue protein sequence, read N- to C-terminus: 3-dehydroquinate synthase (361 aa).

Residues 70–75, 104–108, 128–129, Lys-141, and Lys-150 each bind NAD(+); these read DGEQHK, GVVGD, and TT. The Zn(2+) site is built by Glu-183, His-246, and His-263.

It belongs to the sugar phosphate cyclases superfamily. Dehydroquinate synthase family. Requires Co(2+) as cofactor. Zn(2+) serves as cofactor. NAD(+) is required as a cofactor.

The protein resides in the cytoplasm. The catalysed reaction is 7-phospho-2-dehydro-3-deoxy-D-arabino-heptonate = 3-dehydroquinate + phosphate. The protein operates within metabolic intermediate biosynthesis; chorismate biosynthesis; chorismate from D-erythrose 4-phosphate and phosphoenolpyruvate: step 2/7. Its function is as follows. Catalyzes the conversion of 3-deoxy-D-arabino-heptulosonate 7-phosphate (DAHP) to dehydroquinate (DHQ). The protein is 3-dehydroquinate synthase of Teredinibacter turnerae (strain ATCC 39867 / T7901).